A 211-amino-acid chain; its full sequence is ATP phosphoribosyltransferase (211 aa).

Belongs to the ATP phosphoribosyltransferase family. Short subfamily. Heteromultimer composed of HisG and HisZ subunits.

It is found in the cytoplasm. The enzyme catalyses 1-(5-phospho-beta-D-ribosyl)-ATP + diphosphate = 5-phospho-alpha-D-ribose 1-diphosphate + ATP. Its pathway is amino-acid biosynthesis; L-histidine biosynthesis; L-histidine from 5-phospho-alpha-D-ribose 1-diphosphate: step 1/9. Catalyzes the condensation of ATP and 5-phosphoribose 1-diphosphate to form N'-(5'-phosphoribosyl)-ATP (PR-ATP). Has a crucial role in the pathway because the rate of histidine biosynthesis seems to be controlled primarily by regulation of HisG enzymatic activity. The chain is ATP phosphoribosyltransferase from Bacillus thuringiensis subsp. konkukian (strain 97-27).